The sequence spans 332 residues: Tetraacyldisaccharide 4'-kinase (332 aa).

53-60 (SVGGNGKT) is a binding site for ATP.

The protein belongs to the LpxK family.

The enzyme catalyses a lipid A disaccharide + ATP = a lipid IVA + ADP + H(+). The protein operates within glycolipid biosynthesis; lipid IV(A) biosynthesis; lipid IV(A) from (3R)-3-hydroxytetradecanoyl-[acyl-carrier-protein] and UDP-N-acetyl-alpha-D-glucosamine: step 6/6. Functionally, transfers the gamma-phosphate of ATP to the 4'-position of a tetraacyldisaccharide 1-phosphate intermediate (termed DS-1-P) to form tetraacyldisaccharide 1,4'-bis-phosphate (lipid IVA). This is Tetraacyldisaccharide 4'-kinase from Haemophilus influenzae (strain 86-028NP).